The primary structure comprises 137 residues: Phosphoribosyl-AMP cyclohydrolase (137 aa).

Asp84 contacts Mg(2+). Residue Cys85 coordinates Zn(2+). Mg(2+)-binding residues include Asp86 and Asp88. Zn(2+) contacts are provided by Cys101 and Cys108.

The protein belongs to the PRA-CH family. In terms of assembly, homodimer. Mg(2+) is required as a cofactor. Requires Zn(2+) as cofactor.

It is found in the cytoplasm. The enzyme catalyses 1-(5-phospho-beta-D-ribosyl)-5'-AMP + H2O = 1-(5-phospho-beta-D-ribosyl)-5-[(5-phospho-beta-D-ribosylamino)methylideneamino]imidazole-4-carboxamide. It participates in amino-acid biosynthesis; L-histidine biosynthesis; L-histidine from 5-phospho-alpha-D-ribose 1-diphosphate: step 3/9. Catalyzes the hydrolysis of the adenine ring of phosphoribosyl-AMP. This Chlorobium phaeobacteroides (strain DSM 266 / SMG 266 / 2430) protein is Phosphoribosyl-AMP cyclohydrolase.